A 343-amino-acid polypeptide reads, in one-letter code: Small ribosomal subunit biogenesis GTPase RsgA (343 aa).

The disordered stretch occupies residues 1-32; sequence MAKRRLSKRQVDRIRERQSQRLDTSVAAPDGK. Over residues 9-20 the composition is skewed to basic and acidic residues; it reads RQVDRIRERQSQ. Residues 109–273 form the CP-type G domain; sequence YGKLKPVAAN…CIDSPGIREF (165 aa). Residues 156 to 159 and 215 to 223 contribute to the GTP site; these read NKLD and GQSGVGKSS. Zn(2+) is bound by residues cysteine 297, cysteine 302, histidine 304, and cysteine 310.

The protein belongs to the TRAFAC class YlqF/YawG GTPase family. RsgA subfamily. As to quaternary structure, monomer. Associates with 30S ribosomal subunit, binds 16S rRNA. Zn(2+) is required as a cofactor.

It localises to the cytoplasm. Functionally, one of several proteins that assist in the late maturation steps of the functional core of the 30S ribosomal subunit. Helps release RbfA from mature subunits. May play a role in the assembly of ribosomal proteins into the subunit. Circularly permuted GTPase that catalyzes slow GTP hydrolysis, GTPase activity is stimulated by the 30S ribosomal subunit. This is Small ribosomal subunit biogenesis GTPase RsgA from Saccharophagus degradans (strain 2-40 / ATCC 43961 / DSM 17024).